The sequence spans 649 residues: Acetyl-coenzyme A synthetase (649 aa).

Residues 198-201, Thr317, and Asn341 each bind CoA; that span reads RRGK. ATP is bound by residues 393 to 395, 417 to 422, Asp506, and Arg521; these read GEP and DTWWQT. Ser529 provides a ligand contact to CoA. Residue Arg532 participates in ATP binding. Positions 543, 545, and 548 each coordinate Mg(2+). Lys612 bears the N6-acetyllysine mark. The tract at residues 625-649 is disordered; sequence QPVQGDTSTLEDPTVLERLQASPAL.

The protein belongs to the ATP-dependent AMP-binding enzyme family. Requires Mg(2+) as cofactor. Acetylated. Deacetylation by the SIR2-homolog deacetylase activates the enzyme.

The catalysed reaction is acetate + ATP + CoA = acetyl-CoA + AMP + diphosphate. In terms of biological role, catalyzes the conversion of acetate into acetyl-CoA (AcCoA), an essential intermediate at the junction of anabolic and catabolic pathways. AcsA undergoes a two-step reaction. In the first half reaction, AcsA combines acetate with ATP to form acetyl-adenylate (AcAMP) intermediate. In the second half reaction, it can then transfer the acetyl group from AcAMP to the sulfhydryl group of CoA, forming the product AcCoA. The sequence is that of Acetyl-coenzyme A synthetase from Deinococcus radiodurans (strain ATCC 13939 / DSM 20539 / JCM 16871 / CCUG 27074 / LMG 4051 / NBRC 15346 / NCIMB 9279 / VKM B-1422 / R1).